A 162-amino-acid polypeptide reads, in one-letter code: Sorting nexin-12 (162 aa).

The tract at residues 1-20 is disordered; that stretch reads MSDTAVADTRRLNSKPQDLT. N-acetylserine is present on Ser2. Tyr23 carries the phosphotyrosine modification. The 125-residue stretch at 28 to 152 folds into the PX domain; it reads NFLEIDIFNP…HMFLQEEAID (125 aa). A 1,2-diacyl-sn-glycero-3-phospho-(1D-myo-inositol-3-phosphate) contacts are provided by Arg71, Ser73, Lys96, and Arg119. At Ser73 the chain carries Phosphoserine.

The protein belongs to the sorting nexin family.

The protein localises to the membrane. May be involved in several stages of intracellular trafficking. The protein is Sorting nexin-12 (SNX12) of Homo sapiens (Human).